We begin with the raw amino-acid sequence, 600 residues long: NADH-quinone oxidoreductase subunit C/D (600 aa).

The NADH dehydrogenase I subunit C stretch occupies residues 1 to 190 (MVNNMTDLTA…DPFELTKAKQ (190 aa)). The interval 214-600 (DFMFLNLGPN…IDFVMSDVDR (387 aa)) is NADH dehydrogenase I subunit D.

In the N-terminal section; belongs to the complex I 30 kDa subunit family. The protein in the C-terminal section; belongs to the complex I 49 kDa subunit family. As to quaternary structure, NDH-1 is composed of 13 different subunits. Subunits NuoB, CD, E, F, and G constitute the peripheral sector of the complex.

It is found in the cell inner membrane. The catalysed reaction is a quinone + NADH + 5 H(+)(in) = a quinol + NAD(+) + 4 H(+)(out). Its function is as follows. NDH-1 shuttles electrons from NADH, via FMN and iron-sulfur (Fe-S) centers, to quinones in the respiratory chain. The immediate electron acceptor for the enzyme in this species is believed to be ubiquinone. Couples the redox reaction to proton translocation (for every two electrons transferred, four hydrogen ions are translocated across the cytoplasmic membrane), and thus conserves the redox energy in a proton gradient. In Salmonella paratyphi C (strain RKS4594), this protein is NADH-quinone oxidoreductase subunit C/D.